Here is a 353-residue protein sequence, read N- to C-terminus: Quinolinate synthase (353 aa).

His47 and Ser68 together coordinate iminosuccinate. Residue Cys113 participates in [4Fe-4S] cluster binding. Iminosuccinate contacts are provided by residues 139-141 (YAN) and Ser156. A [4Fe-4S] cluster-binding site is contributed by Cys200. Residues 226 to 228 (HPE) and Thr243 each bind iminosuccinate. Cys297 contacts [4Fe-4S] cluster.

This sequence belongs to the quinolinate synthase family. Type 1 subfamily. [4Fe-4S] cluster is required as a cofactor.

The protein resides in the cytoplasm. It carries out the reaction iminosuccinate + dihydroxyacetone phosphate = quinolinate + phosphate + 2 H2O + H(+). It functions in the pathway cofactor biosynthesis; NAD(+) biosynthesis; quinolinate from iminoaspartate: step 1/1. In terms of biological role, catalyzes the condensation of iminoaspartate with dihydroxyacetone phosphate to form quinolinate. This chain is Quinolinate synthase, found in Pectobacterium atrosepticum (strain SCRI 1043 / ATCC BAA-672) (Erwinia carotovora subsp. atroseptica).